We begin with the raw amino-acid sequence, 318 residues long: L-lactate dehydrogenase (318 aa).

NAD(+) contacts are provided by residues V18, D39, K44, Y69, and 83 to 84 (GA). Substrate is bound by residues Q86 and R92. NAD(+)-binding positions include S105, 122–124 (VSN), and S147. Position 124–127 (124–127 (NPVD)) interacts with substrate. Residue 152–155 (DTSR) coordinates substrate. Catalysis depends on H179, which acts as the Proton acceptor. Position 225 is a phosphotyrosine (Y225). T234 is a substrate binding site.

This sequence belongs to the LDH/MDH superfamily. LDH family. Homotetramer.

The protein localises to the cytoplasm. The enzyme catalyses (S)-lactate + NAD(+) = pyruvate + NADH + H(+). The protein operates within fermentation; pyruvate fermentation to lactate; (S)-lactate from pyruvate: step 1/1. Its function is as follows. Catalyzes the conversion of lactate to pyruvate. The protein is L-lactate dehydrogenase of Clostridium botulinum (strain Loch Maree / Type A3).